A 165-amino-acid chain; its full sequence is Phosphopantetheine adenylyltransferase (165 aa).

Substrate is bound at residue threonine 9. ATP-binding positions include 9 to 10 (TF) and histidine 17. 3 residues coordinate substrate: lysine 41, leucine 73, and arginine 87. Residues 88-90 (GLR), glutamate 98, and 123-129 (LQPIASR) contribute to the ATP site.

It belongs to the bacterial CoaD family. As to quaternary structure, homohexamer. Mg(2+) is required as a cofactor.

It is found in the cytoplasm. It catalyses the reaction (R)-4'-phosphopantetheine + ATP + H(+) = 3'-dephospho-CoA + diphosphate. Its pathway is cofactor biosynthesis; coenzyme A biosynthesis; CoA from (R)-pantothenate: step 4/5. Its function is as follows. Reversibly transfers an adenylyl group from ATP to 4'-phosphopantetheine, yielding dephospho-CoA (dPCoA) and pyrophosphate. This Rhizorhabdus wittichii (strain DSM 6014 / CCUG 31198 / JCM 15750 / NBRC 105917 / EY 4224 / RW1) (Sphingomonas wittichii) protein is Phosphopantetheine adenylyltransferase.